Consider the following 294-residue polypeptide: Type 4 apparatus protein DotZ (294 aa).

The T4BSS is a complex nanomachine composed of several subcomplexes. This subunit is part of the Type IV Coupling Complex (T4CC), a subcomplex composed of the DotLMNYZ core and the IcmSW-LvgA adapter subunits, linked by the C-terminal tail of DotL. Six DotLMNYZ hetero-pentameric units may assemble into a hexameric nanomachine, forming an inner membrane channel for effectors to pass through. Makes significant contact with DotN and DotY, but engages weakly with DotM and DotL. DotY and DotZ are co-dependent for the assembly into the T4CC.

It is found in the cytoplasm. Its function is as follows. Component of the Dot/Icm type IVB secretion system (T4BSS), which is used to inject bacterial effector proteins into eukaryotic host cells. Part of a subcomplex which recruits effector proteins and delivers them to the core transmembrane subcomplex. DotY and DotZ play a role in effector translocation, but are not essential and do not influence the stability of the subcomplex main components. The DotY/DotZ main function is to optimize secretion by modulating the delivery trajectory of the IcmSW module and the localization of the machinery to the poles. This Legionella pneumophila subsp. pneumophila (strain Philadelphia 1 / ATCC 33152 / DSM 7513) protein is Type 4 apparatus protein DotZ.